Consider the following 473-residue polypeptide: Reticulon-4 receptor (473 aa).

The first 26 residues, Met-1 to Pro-26, serve as a signal peptide directing secretion. Cystine bridges form between Cys-27-Cys-33 and Cys-31-Cys-43. Residues Cys-27–Ala-57 form the LRRNT domain. LRR repeat units follow at residues Ser-58–Ser-79, Asn-82–Gly-103, Leu-106–Gly-128, His-131–Gly-152, Ala-155–Asp-176, Asn-179–Gly-200, Ser-203–Asp-224, and Arg-227–Pro-248. Residue Asn-82 is glycosylated (N-linked (GlcNAc...) asparagine). N-linked (GlcNAc...) asparagine glycosylation is present at Asn-179. An LRRCT domain is found at Asn-260–Val-311. 3 disulfide bridges follow: Cys-264-Cys-287, Cys-266-Cys-335, and Cys-309-Cys-336. The segment at Val-346–Gly-446 is disordered. Residue Asn-372 is glycosylated (N-linked (GlcNAc...) asparagine). The segment covering Pro-413–Cys-429 has biased composition (basic residues). The segment covering Ala-434–Glu-445 has biased composition (gly residues). The GPI-anchor amidated serine moiety is linked to residue Ser-447. The propeptide at Gly-448–Cys-473 is removed in mature form.

It belongs to the Nogo receptor family. As to quaternary structure, homodimer. Interacts with MAG. Interacts with RTN4. Interacts with NGFR. Interacts with LINGO1. Interacts with KIAA0319L. Interacts with OLFM1; this inhibits interaction with LINGO1 and NGFR. Interacts with OMG. N-glycosylated. O-glycosylated. Contains terminal sialic acid groups on its glycan chains. As to expression, detected in embryonic hippocampus neurons. Detected in brain (at protein level). Detected in neurons in the neocortex, in hippocampus, dorsal thalamus, cerebellum granule cell layer and the mitral cell layer in the olfactory bulb. Detected in brain, dorsal root ganglion and heart.

The protein resides in the cell membrane. It localises to the membrane raft. The protein localises to the cell projection. It is found in the dendrite. Its subcellular location is the axon. The protein resides in the perikaryon. Receptor for RTN4, OMG and MAG. Functions as a receptor for the sialylated gangliosides GT1b and GM1. Besides, functions as a receptor for chondroitin sulfate proteoglycans. Can also bind heparin. Intracellular signaling cascades are triggered via the coreceptor NGFR. Signaling mediates activation of Rho and downstream reorganization of the actin cytoskeleton. Mediates axonal growth inhibition. Mediates axonal growth inhibition and plays a role in regulating axon regeneration and neuronal plasticity in the adult central nervous system. Plays a role in postnatal brain development. Required for normal axon migration across the brain midline and normal formation of the corpus callosum. Protects motoneurons against apoptosis; protection against apoptosis is probably mediated via interaction with MAG. Acts in conjunction with RTN4 and LINGO1 in regulating neuronal precursor cell motility during cortical development. Like other family members, plays a role in restricting the number dendritic spines and the number of synapses that are formed during brain development. In Mus musculus (Mouse), this protein is Reticulon-4 receptor (Rtn4r).